The chain runs to 582 residues: Histone deacetylase 9-B (582 aa).

An interaction with mef2 region spans residues 146–195 (SNEVKQKLQEFLLSKSTKDITLNGIPQKITQSSKLWYTASHHTSLEQSSP). The span at 189–205 (SLEQSSPPLGGASSSCK) shows a compositional bias: polar residues. Disordered regions lie at residues 189–254 (SLEQ…KEGN), 270–314 (TASS…QSRL), 409–447 (LSSG…RTQS), and 496–567 (VHLQ…NQSS). Composition is skewed to basic and acidic residues over residues 213 to 224 (DYRDDFPLRKTV) and 238 to 253 (KVAE…RKEG). Over residues 270-289 (TASSSAPGSGPSSPNGACSA) the composition is skewed to low complexity. Residues 295–314 (GPSSLPVTTRTERWPSQSRL) are compositionally biased toward polar residues.

It belongs to the histone deacetylase family. HD type 2 subfamily. Homodimer. Interacts with mef2.

It localises to the nucleus. It catalyses the reaction N(6)-acetyl-L-lysyl-[histone] + H2O = L-lysyl-[histone] + acetate. Its function is as follows. Devoided of intrinsic deacetylase activity, promotes the deacetylation of lysine residues on the N-terminal part of the core histones (H2A, H2B, H3 and H4) by recruiting other histone deacetylases. Histone deacetylation gives a tag for epigenetic repression and plays an important role in transcriptional regulation, cell cycle progression and developmental events. Represses MEF2-dependent transcription. This chain is Histone deacetylase 9-B (hdac9b), found in Danio rerio (Zebrafish).